Reading from the N-terminus, the 348-residue chain is Phosphoribosylformylglycinamidine cyclo-ligase (348 aa).

It belongs to the AIR synthase family.

It localises to the cytoplasm. The catalysed reaction is 2-formamido-N(1)-(5-O-phospho-beta-D-ribosyl)acetamidine + ATP = 5-amino-1-(5-phospho-beta-D-ribosyl)imidazole + ADP + phosphate + H(+). The protein operates within purine metabolism; IMP biosynthesis via de novo pathway; 5-amino-1-(5-phospho-D-ribosyl)imidazole from N(2)-formyl-N(1)-(5-phospho-D-ribosyl)glycinamide: step 2/2. In Geobacter metallireducens (strain ATCC 53774 / DSM 7210 / GS-15), this protein is Phosphoribosylformylglycinamidine cyclo-ligase.